The following is a 219-amino-acid chain: uncharacterized protein (219 aa).

Positions 42–71 (RQPRVVPVTSSDPEVVDDEDDEDQSDDSDE) are disordered. The span at 45-54 (RVVPVTSSDP) shows a compositional bias: low complexity. The segment covering 55–71 (EVVDDEDDEDQSDDSDE) has biased composition (acidic residues).

This is an uncharacterized protein from Dryophytes versicolor (chameleon treefrog).